The following is a 329-amino-acid chain: MDIDASCSLVLYGKSSVETDTATRLKNNNVLKLPDNSKVSIFLQSEIKNLVRDDDSSFNLSLFMNSISTHRFGRFLIWSPYLSSTHDVVSHNFSEIPVGSVCVSDIQLKGRGRTKNVWESPKGCLMYSFTLEMEDGRVVPLIQYVVSLAVTEAVKDVCDKKGLSYNDVKIKWPNDLYLNGLKIGGILCTSTYRSRKFLVSVGVGLNVDNEQPTTCLNAVLKDVCPPSNLLKREEILGAFFKKFENFFDLFMEQGFKSLEELYYRTWLHSGQRVIAEEKNEDQVVQNVVTIQGLTSSGYLLAIGDDNVMYELHPDGNSFDFFKGLVRRKL.

In terms of domain architecture, BPL/LPL catalytic spans 67-251 (ISTHRFGRFL…KFENFFDLFM (185 aa)). Biotin is bound by residues 84 to 85 (ST), Gln107, 111 to 113 (RGR), and Lys182.

It belongs to the biotin--protein ligase family. In terms of tissue distribution, highly expressed in seeds. Expressed in roots, leaves, stems, flowers and siliques.

It is found in the cytoplasm. Seems to have no or limited implication in biotin-dependent carboxylase biotinylation in planta. In Arabidopsis thaliana (Mouse-ear cress), this protein is Biotin--protein ligase 2 (HCS2).